Consider the following 322-residue polypeptide: Methionyl-tRNA formyltransferase (322 aa).

115-118 (SLLP) is a binding site for (6S)-5,6,7,8-tetrahydrofolate.

Belongs to the Fmt family.

The catalysed reaction is L-methionyl-tRNA(fMet) + (6R)-10-formyltetrahydrofolate = N-formyl-L-methionyl-tRNA(fMet) + (6S)-5,6,7,8-tetrahydrofolate + H(+). Attaches a formyl group to the free amino group of methionyl-tRNA(fMet). The formyl group appears to play a dual role in the initiator identity of N-formylmethionyl-tRNA by promoting its recognition by IF2 and preventing the misappropriation of this tRNA by the elongation apparatus. This Treponema denticola (strain ATCC 35405 / DSM 14222 / CIP 103919 / JCM 8153 / KCTC 15104) protein is Methionyl-tRNA formyltransferase.